A 546-amino-acid chain; its full sequence is CCA tRNA nucleotidyltransferase, mitochondrial (546 aa).

Belongs to the tRNA nucleotidyltransferase/poly(A) polymerase family.

The protein resides in the mitochondrion. It localises to the cytoplasm. The protein localises to the nucleus. It catalyses the reaction a tRNA precursor + 2 CTP + ATP = a tRNA with a 3' CCA end + 3 diphosphate. In terms of biological role, nucleotidyltransferase that catalyzes the addition and repair of the essential 3'-terminal CCA sequence in tRNAs, which is necessary for the attachment of amino acids to the 3' terminus of tRNA molecules, using CTP and ATP as substrates. tRNA 3'-terminal CCA addition is required both for tRNA processing and repair. Also involved in tRNA surveillance by mediating tandem CCA addition to generate a CCACCA at the 3' terminus of unstable tRNAs. While stable tRNAs receive only 3'-terminal CCA, unstable tRNAs are marked with CCACCA and rapidly degraded. The structural flexibility of RNA controls the choice between CCA versus CCACCA addition: following the first CCA addition cycle, nucleotide-binding to the active site triggers a clockwise screw motion, producing torque on the RNA. This ejects stable RNAs, whereas unstable RNAs are refolded while bound to the enzyme and subjected to a second CCA catalytic cycle. This chain is CCA tRNA nucleotidyltransferase, mitochondrial (CCA1), found in Saccharomyces cerevisiae (strain ATCC 204508 / S288c) (Baker's yeast).